The following is a 677-amino-acid chain: Electrogenic aspartate/glutamate antiporter SLC25A12, mitochondrial (677 aa).

At alanine 2 the chain carries N-acetylalanine. The regulatory N-terminal domain stretch occupies residues 2–294 (AVKVHTTKRG…TLADIERIAP (293 aa)). Residues 2-329 (AVKVHTTKRG…WLQIAESAYR (328 aa)) are Mitochondrial intermembrane-facing. EF-hand domains follow at residues 40-85 (VQRY…SVLC), 86-121 (APDS…TIIH), 122-156 (HHIP…FLQE), and 157-192 (LQLE…IRSH). Positions 65, 67, 69, 71, and 76 each coordinate Ca(2+). The segment at 295–310 (LAEGALPYNLAELQRQ) is linker loop domain. A carrier domain region spans residues 320–612 (WLQIAESAYR…RWFYIDFGGL (293 aa)). Solcar repeat units lie at residues 324 to 416 (AESA…VRDK), 424 to 508 (IPLP…CKLL), and 516 to 604 (VGGI…LQRW). A helical transmembrane segment spans residues 330 to 347 (FTLGSVAGAVGATAVYPI). The Mitochondrial matrix portion of the chain corresponds to 348–390 (DLVKTRMQNQRGTGSVVGELMYKNSFDCFKKVLRYEGFFGLYR). A helical membrane pass occupies residues 391-410 (GLIPQLIGVAPEKAIKLTVN). Over 411–433 (DFVRDKFTKRDGSIPLPAEILAG) the chain is Mitochondrial intermembrane. The helical transmembrane segment at 434–447 (GCAGGSQVIFTNPL) threads the bilayer. The Mitochondrial matrix segment spans residues 448-482 (EIVKIRLQVAGEITTGPRVSALNVLQDLGLFGLYK). A helical transmembrane segment spans residues 483-502 (GAKACFLRDIPFSAIYFPVY). The Mitochondrial intermembrane portion of the chain corresponds to 503–521 (AHCKLLLADENGRVGGINL). Residues 522–539 (LTAGALAGVPAASLVTPA) traverse the membrane as a helical segment. The Mitochondrial matrix portion of the chain corresponds to 540–578 (DVIKTRLQVAARAGQTTYSGVVDCFRKILREEGPSAFWK). A helical membrane pass occupies residues 579–598 (GTAARVFRSSPQFGVTLVTY). At 599-677 (ELLQRWFYID…AQPKAAAAAQ (79 aa)) the chain is on the mitochondrial intermembrane side. The segment at 613–677 (KPSGSEPTPK…AQPKAAAAAQ (65 aa)) is C-terminal domain.

It belongs to the mitochondrial carrier (TC 2.A.29) family. As to quaternary structure, homodimer (via N-terminus).

Its subcellular location is the mitochondrion inner membrane. It carries out the reaction L-aspartate(in) + L-glutamate(out) + H(+)(out) = L-aspartate(out) + L-glutamate(in) + H(+)(in). The enzyme catalyses 3-sulfino-L-alanine(out) + L-glutamate(in) + H(+)(in) = 3-sulfino-L-alanine(in) + L-glutamate(out) + H(+)(out). The catalysed reaction is 3-sulfino-L-alanine(out) + L-aspartate(in) = 3-sulfino-L-alanine(in) + L-aspartate(out). Mitochondrial electrogenic aspartate/glutamate antiporter that favors efflux of aspartate and entry of glutamate and proton within the mitochondria as part of the malate-aspartate shuttle. Also mediates the uptake of L-cysteinesulfinate (3-sulfino-L-alanine) by mitochondria in exchange of L-glutamate and proton. Can also exchange L-cysteinesulfinate with aspartate in their anionic form without any proton translocation. Lacks transport activity towards L-glutamine or gamma-aminobutyric acid (GABA). In Mus musculus (Mouse), this protein is Electrogenic aspartate/glutamate antiporter SLC25A12, mitochondrial.